Here is a 410-residue protein sequence, read N- to C-terminus: Lissencephaly-1 homolog (410 aa).

A LisH domain is found at Gln7–Val39. Residues Thr56 to Gly82 are a coiled coil. WD repeat units lie at residues Gly106 to Lys147, Gly148 to Thr187, Gly190 to Thr229, Gly232 to Glu271, Glu274 to Thr333, Gly336 to Asn377, and Ala378 to Arg410.

It belongs to the WD repeat LIS1/nudF family. As to quaternary structure, can self-associate. Component of the cytosolic PAF-AH (I) heterotetrameric enzyme, which is composed of PAFAH1B1 (beta), PAFAH1B2 (alpha2) and PAFAH1B3 (alpha1) subunits. The catalytic activity of the enzyme resides in the alpha1 (PAFAH1B3) and alpha2 (PAFAH1B2) subunits, whereas the beta subunit (PAFAH1B1) has regulatory activity. Trimer formation is not essential for the catalytic activity. Interacts with dynein, dynactin, NDE1 and NDEL1.

It is found in the cytoplasm. The protein localises to the cytoskeleton. The protein resides in the microtubule organizing center. Its subcellular location is the centrosome. Functionally, regulatory subunit (beta subunit) of the cytosolic type I platelet-activating factor (PAF) acetylhydrolase (PAF-AH (I)), an enzyme that catalyzes the hydrolyze of the acetyl group at the sn-2 position of PAF and its analogs and participates in PAF inactivation. Regulates the PAF-AH (I) activity in a catalytic dimer composition-dependent manner. Positively regulates the activity of the minus-end directed microtubule motor protein dynein. May enhance dynein-mediated microtubule sliding by targeting dynein to the microtubule plus end. Required for several dynein- and microtubule-dependent processes such as the maintenance of Golgi integrity, the peripheral transport of microtubule fragments and the coupling of the nucleus and centrosome. May be required for proliferation of neuronal precursors and neuronal migration. This chain is Lissencephaly-1 homolog, found in Gallus gallus (Chicken).